The following is a 443-amino-acid chain: Xaa-Pro dipeptidase (443 aa).

Residues D246, D257, H339, E384, and E423 each contribute to the Mn(2+) site.

It belongs to the peptidase M24B family. Bacterial-type prolidase subfamily. Requires Mn(2+) as cofactor.

The catalysed reaction is Xaa-L-Pro dipeptide + H2O = an L-alpha-amino acid + L-proline. Splits dipeptides with a prolyl residue in the C-terminal position. The polypeptide is Xaa-Pro dipeptidase (Cronobacter sakazakii (strain ATCC BAA-894) (Enterobacter sakazakii)).